The sequence spans 384 residues: Cytochrome b (384 aa).

The next 4 membrane-spanning stretches (helical) occupy residues Tyr33–Met53, Trp77–Ile98, Trp113–Leu133, and Phe178–Leu198. Residues His83 and His97 each contribute to the heme b site. Residues His182 and His196 each coordinate heme b. His201 lines the a ubiquinone pocket. The next 4 helical transmembrane spans lie at Tyr226–Thr246, Leu288–His308, Leu320–Gly340, and Phe347–Pro367.

It belongs to the cytochrome b family. In terms of assembly, the cytochrome bc1 complex contains 3 respiratory subunits (MT-CYB, CYC1 and UQCRFS1), 2 core proteins (UQCRC1 and UQCRC2) and probably 6 low-molecular weight proteins. It depends on heme b as a cofactor.

It localises to the mitochondrion inner membrane. In terms of biological role, component of the ubiquinol-cytochrome c reductase complex (complex III or cytochrome b-c1 complex) that is part of the mitochondrial respiratory chain. The b-c1 complex mediates electron transfer from ubiquinol to cytochrome c. Contributes to the generation of a proton gradient across the mitochondrial membrane that is then used for ATP synthesis. In Anoplogaster cornuta (Common fangtooth), this protein is Cytochrome b (mt-cyb).